The sequence spans 100 residues: Large ribosomal subunit protein eL36B (100 aa).

The protein belongs to the eukaryotic ribosomal protein eL36 family. Component of the large ribosomal subunit (LSU). Mature yeast ribosomes consist of a small (40S) and a large (60S) subunit. The 40S small subunit contains 1 molecule of ribosomal RNA (18S rRNA) and 33 different proteins (encoded by 57 genes). The large 60S subunit contains 3 rRNA molecules (25S, 5.8S and 5S rRNA) and 46 different proteins (encoded by 81 genes).

It localises to the cytoplasm. In terms of biological role, component of the ribosome, a large ribonucleoprotein complex responsible for the synthesis of proteins in the cell. The small ribosomal subunit (SSU) binds messenger RNAs (mRNAs) and translates the encoded message by selecting cognate aminoacyl-transfer RNA (tRNA) molecules. The large subunit (LSU) contains the ribosomal catalytic site termed the peptidyl transferase center (PTC), which catalyzes the formation of peptide bonds, thereby polymerizing the amino acids delivered by tRNAs into a polypeptide chain. The nascent polypeptides leave the ribosome through a tunnel in the LSU and interact with protein factors that function in enzymatic processing, targeting, and the membrane insertion of nascent chains at the exit of the ribosomal tunnel. In Saccharomyces cerevisiae (strain ATCC 204508 / S288c) (Baker's yeast), this protein is Large ribosomal subunit protein eL36B.